We begin with the raw amino-acid sequence, 596 residues long: Elongation factor 4 (596 aa).

The 183-residue stretch at 2–184 folds into the tr-type G domain; it reads RNIRNFSIIA…AIVHRIPPPK (183 aa). GTP is bound by residues 14–19 and 131–134; these read DHGKST and NKID.

The protein belongs to the TRAFAC class translation factor GTPase superfamily. Classic translation factor GTPase family. LepA subfamily.

The protein resides in the cell inner membrane. The enzyme catalyses GTP + H2O = GDP + phosphate + H(+). Required for accurate and efficient protein synthesis under certain stress conditions. May act as a fidelity factor of the translation reaction, by catalyzing a one-codon backward translocation of tRNAs on improperly translocated ribosomes. Back-translocation proceeds from a post-translocation (POST) complex to a pre-translocation (PRE) complex, thus giving elongation factor G a second chance to translocate the tRNAs correctly. Binds to ribosomes in a GTP-dependent manner. The protein is Elongation factor 4 of Xanthomonas euvesicatoria pv. vesicatoria (strain 85-10) (Xanthomonas campestris pv. vesicatoria).